Reading from the N-terminus, the 152-residue chain is Large ribosomal subunit protein bL9 (152 aa).

Belongs to the bacterial ribosomal protein bL9 family.

Its function is as follows. Binds to the 23S rRNA. The polypeptide is Large ribosomal subunit protein bL9 (Prochlorococcus marinus (strain MIT 9313)).